The chain runs to 1759 residues: Zinc finger protein castor homolog 1 (1759 aa).

Disordered regions lie at residues 1–26 (MDLGTAEGTRCTDPPAGKPAMAPKRK) and 46–175 (KRAD…SSLR). 2 stretches are compositionally biased toward basic and acidic residues: residues 77–88 (PRSEEDKRRAVI) and 137–160 (EEPSKDGGALEEKDSDGAASKEDS). The segment covering 161 to 171 (GPSTRQASGEA) has biased composition (polar residues). Lys288 participates in a covalent cross-link: Glycyl lysine isopeptide (Lys-Gly) (interchain with G-Cter in SUMO2). The segment at 374–420 (SKYDVRGIQKPGPAKVPPTPSLAPAPLASVPSAPSAPGPGPEPPASL) is disordered. Residues 387 to 396 (AKVPPTPSLA) show a composition bias toward pro residues. Low complexity predominate over residues 397–406 (PAPLASVPSA). Pro residues predominate over residues 407–417 (PSAPGPGPEPP). C2H2-type zinc fingers lie at residues 551 to 575 (YHCMQVGCNKVYTSTSDVMTHENFH), 610 to 634 (FHCRRPGCTFTFKNKCDIEKHKSYH), and 668 to 692 (FHCIRAGCGFTFTSTSQMTSHKRKH). 4 disordered regions span residues 686-723 (TSHKRKHERRHIRSSGALGLPPSLLGAKDTEHEESSND), 736-776 (SSLS…SGLL), 824-843 (VSSGSAASATPDTPTLVASG), and 889-949 (ATFD…AVPA). The span at 687 to 698 (SHKRKHERRHIR) shows a compositional bias: basic residues. The segment covering 699–712 (SSGALGLPPSLLGA) has biased composition (low complexity). Phosphoserine is present on residues Ser720 and Ser721. Residues 736-764 (SSLSASPTSQQSSASLAAATAATEAGPSA) are compositionally biased toward low complexity. Positions 925–939 (ASQDRSLDLTVKEPS) are enriched in basic and acidic residues. Residue Lys975 forms a Glycyl lysine isopeptide (Lys-Gly) (interchain with G-Cter in SUMO2) linkage. Ser981 bears the Phosphoserine mark. A C2H2-type 4 zinc finger spans residues 1031 to 1055 (FHCVVEECGALFSTLDGAIKHANFH). The interval 1067–1111 (TEAAFPASAAETKPPMAPSSPPVPPVTTATVSSLEGPAPSPASVP) is disordered. Positions 1081 to 1091 (PMAPSSPPVPP) are enriched in pro residues. A C2H2-type 5 zinc finger spans residues 1300-1324 (FHCIREGCQFSFLLKHQMTSHARKH). Residues 1367–1392 (ESSTMDRSCSSTPVGNESTAAGNTIS) are disordered. C2H2-type zinc fingers lie at residues 1457 to 1481 (YHCTRENCGYKFCGRTHMYKHAQHH), 1515 to 1537 (FHCLRCRFRCTDSTKVTAHRKHH), and 1571 to 1595 (FHCTFPGCRHTVVGMSQMDSHKRKH). 2 disordered regions span residues 1589-1620 (DSHKRKHEKQERGEPAAEGPAPGPPISLDGSL) and 1643-1736 (LGDA…AGAR). Positions 1655-1673 (AAPGPREGAAAAAAAAGES) are enriched in low complexity. A compositionally biased stretch (acidic residues) spans 1674–1723 (SQEDEEEELELPEEEAEDDEDEDDDEDDDDEDDDEDDDDEDLRTDSEESL). Low complexity predominate over residues 1724 to 1736 (PEAAAEAAGAGAR).

As to expression, expressed in heart, lung, skeletal muscle, pancreas, testis, small intestine, and stomach, but it is not detectable in the adult brain.

It localises to the nucleus. Transcriptional activator. Involved in vascular assembly and morphogenesis through direct transcriptional regulation of EGFL7. The protein is Zinc finger protein castor homolog 1 (CASZ1) of Homo sapiens (Human).